Here is a 163-residue protein sequence, read N- to C-terminus: Ribosome maturation factor RimM (163 aa).

Residues 92–162 (EDEFYVADLV…AGRAVVRPPE (71 aa)) form the PRC barrel domain.

Belongs to the RimM family. Binds ribosomal protein uS19.

Its subcellular location is the cytoplasm. An accessory protein needed during the final step in the assembly of 30S ribosomal subunit, possibly for assembly of the head region. Essential for efficient processing of 16S rRNA. May be needed both before and after RbfA during the maturation of 16S rRNA. It has affinity for free ribosomal 30S subunits but not for 70S ribosomes. The protein is Ribosome maturation factor RimM of Rubrobacter xylanophilus (strain DSM 9941 / JCM 11954 / NBRC 16129 / PRD-1).